The following is a 362-amino-acid chain: Very-long-chain (3R)-3-hydroxyacyl-CoA dehydratase 3 (362 aa).

M1 carries the N-acetylmethionine modification. Residues 1–149 are Cytoplasmic-facing; the sequence is MENQVLTPHV…ETLTSLKKGY (149 aa). In terms of domain architecture, CS spans 5 to 94; the sequence is VLTPHVYWAQ…KESQWWERLT (90 aa). T7 carries the post-translational modification Phosphothreonine. Residues 111–136 are a coiled coil; that stretch reads LDESDAEMELRAKEEEQLNKLRLESQ. S114 and S135 each carry phosphoserine. A helical membrane pass occupies residues 150 to 170; the sequence is LFMYNLVQFLGFSWIFVNMTV. Residues 171–189 lie on the Lumenal side of the membrane; sequence RFFILGKESFYDTFHTVAD. A helical transmembrane segment spans residues 190–210; the sequence is MMYFCQMLAAVESINAAIGVT. Topologically, residues 211–212 are cytoplasmic; sequence KS. A helical transmembrane segment spans residues 213–233; it reads PVVPSLFQLLGRNFILFIIFG. At 234–242 the chain is on the lumenal side; it reads TMEEMQNKA. Residues 243–263 form a helical membrane-spanning segment; sequence VVFFVFYIWSTVEIFRYPFYM. Residues 264-280 lie on the Cytoplasmic side of the membrane; sequence LSCIDMDWKVLTWLRYT. The chain crosses the membrane as a helical span at residues 281 to 301; it reads VWIPLYPMGCLAEAVSVIQSI. Residues Y286 and E293 contribute to the active site. The Lumenal portion of the chain corresponds to 302 to 325; it reads PVFNETGRFSFTLPYPVKIKVRFS. The helical transmembrane segment at 326 to 346 threads the bilayer; that stretch reads FFLQIYLILLFLGLYVNFRYL. The Cytoplasmic segment spans residues 347-362; that stretch reads YKQRRRRFGQKKKKIH.

It belongs to the very long-chain fatty acids dehydratase HACD family. May interact with enzymes of the ELO family (including ELOVL1); with those enzymes that mediate condensation, the first of the four steps of the reaction cycle responsible for fatty acids elongation, may be part of a larger fatty acids elongase complex. Interacts with RAC1. Associates with internalized insulin receptor/INSR complexes on Golgi/endosomal membranes; HACD3/PTPLAD1 together with ATIC and PRKAA2/AMPK2 is proposed to be part of a signaling network regulating INSR autophosphorylation and endocytosis.

It localises to the endoplasmic reticulum membrane. The catalysed reaction is a very-long-chain (3R)-3-hydroxyacyl-CoA = a very-long-chain (2E)-enoyl-CoA + H2O. It carries out the reaction (3R)-hydroxyhexadecanoyl-CoA = (2E)-hexadecenoyl-CoA + H2O. Its pathway is lipid metabolism; fatty acid biosynthesis. Functionally, catalyzes the third of the four reactions of the long-chain fatty acids elongation cycle. This endoplasmic reticulum-bound enzymatic process, allows the addition of two carbons to the chain of long- and very long-chain fatty acids/VLCFAs per cycle. This enzyme catalyzes the dehydration of the 3-hydroxyacyl-CoA intermediate into trans-2,3-enoyl-CoA, within each cycle of fatty acid elongation. Thereby, it participates in the production of VLCFAs of different chain lengths that are involved in multiple biological processes as precursors of membrane lipids and lipid mediators. Involved in Rac1-signaling pathways leading to the modulation of gene expression. Promotes insulin receptor/INSR autophosphorylation and is involved in INSR internalization. This is Very-long-chain (3R)-3-hydroxyacyl-CoA dehydratase 3 from Bos taurus (Bovine).